The primary structure comprises 410 residues: O-methyltransferase afvC (410 aa).

S-adenosyl-L-methionine contacts are provided by residues 253 to 254 (GG), Asp-278, 299 to 300 (DF), and Arg-315. His-319 (proton acceptor) is an active-site residue.

It belongs to the class I-like SAM-binding methyltransferase superfamily. Cation-independent O-methyltransferase family. COMT subfamily.

Its pathway is secondary metabolite biosynthesis. Functionally, O-methyltransferase; part of the gene cluster that mediates the biosynthesis of aflavarin, a bicoumarin that exhibits anti-insectan activity against the fungivorous beetle C.hemipterus. The chain is O-methyltransferase afvC from Aspergillus flavus (strain ATCC 200026 / FGSC A1120 / IAM 13836 / NRRL 3357 / JCM 12722 / SRRC 167).